The chain runs to 438 residues: 23S rRNA (uracil(1939)-C(5))-methyltransferase RlmD (438 aa).

The region spanning 9 to 68 (RRTVNRHIITVTADNLDAQGQGVARHQGKTIFVAGLLPGEQAQVQLTEEKRQFAKAKLVK) is the TRAM domain. [4Fe-4S] cluster is bound by residues Cys81, Cys87, Cys90, and Cys168. Positions 272, 301, 306, 322, 349, and 370 each coordinate S-adenosyl-L-methionine. Cys396 (nucleophile) is an active-site residue.

It belongs to the class I-like SAM-binding methyltransferase superfamily. RNA M5U methyltransferase family. RlmD subfamily.

The enzyme catalyses uridine(1939) in 23S rRNA + S-adenosyl-L-methionine = 5-methyluridine(1939) in 23S rRNA + S-adenosyl-L-homocysteine + H(+). Its function is as follows. Catalyzes the formation of 5-methyl-uridine at position 1939 (m5U1939) in 23S rRNA. The polypeptide is 23S rRNA (uracil(1939)-C(5))-methyltransferase RlmD (Photorhabdus laumondii subsp. laumondii (strain DSM 15139 / CIP 105565 / TT01) (Photorhabdus luminescens subsp. laumondii)).